The following is a 470-amino-acid chain: Neuraminidase (470 aa).

Residues 1–6 (MNPNQK) are Intravirion-facing. Residues 7–27 (IITIGSASIVLTTIGLLLQIT) form a helical membrane-spanning segment. The involved in apical transport and lipid raft association stretch occupies residues 11–33 (GSASIVLTTIGLLLQITSLCSIW). At 28–470 (SLCSIWFSHY…GALLPFDIDK (443 aa)) the chain is on the virion surface side. The tract at residues 36 to 88 (HYNQVTQPHEQACSNNTTNYYNETFVNVTNVQNNYTTIIEPSAPNVVHYSSGR) is hypervariable stalk region. N-linked (GlcNAc...) asparagine; by host glycosylation is found at N50, N51, N57, N62, and N69. Positions 90 to 470 (LCPVKGWAPL…GALLPFDIDK (381 aa)) are head of neuraminidase. 8 cysteine pairs are disulfide-bonded: C91/C418, C123/C128, C183/C230, C232/C237, C278/C291, C280/C289, C317/C334, and C422/C447. R117 contributes to the substrate binding site. A glycan (N-linked (GlcNAc...) asparagine; by host) is linked at N145. Residue D150 is the Proton donor/acceptor of the active site. R151 contributes to the substrate binding site. N269 is a glycosylation site (N-linked (GlcNAc...) asparagine; by host). Substrate is bound at residue 276–277 (EE). R292 is a binding site for substrate. D293, G297, and D323 together coordinate Ca(2+). R369 is a binding site for substrate. The N-linked (GlcNAc...) asparagine; by host glycan is linked to N399. The Nucleophile role is filled by Y403. The N-linked (GlcNAc...) asparagine; by host glycan is linked to N417.

Belongs to the glycosyl hydrolase 34 family. As to quaternary structure, homotetramer. Ca(2+) serves as cofactor. Post-translationally, N-glycosylated.

It localises to the virion membrane. It is found in the host apical cell membrane. It catalyses the reaction Hydrolysis of alpha-(2-&gt;3)-, alpha-(2-&gt;6)-, alpha-(2-&gt;8)- glycosidic linkages of terminal sialic acid residues in oligosaccharides, glycoproteins, glycolipids, colominic acid and synthetic substrates.. With respect to regulation, inhibited by the neuraminidase inhibitors zanamivir (Relenza) and oseltamivir (Tamiflu). These drugs interfere with the release of progeny virus from infected cells and are effective against all influenza strains. Resistance to neuraminidase inhibitors is quite rare. Its function is as follows. Catalyzes the removal of terminal sialic acid residues from viral and cellular glycoconjugates. Cleaves off the terminal sialic acids on the glycosylated HA during virus budding to facilitate virus release. Additionally helps virus spread through the circulation by further removing sialic acids from the cell surface. These cleavages prevent self-aggregation and ensure the efficient spread of the progeny virus from cell to cell. Otherwise, infection would be limited to one round of replication. Described as a receptor-destroying enzyme because it cleaves a terminal sialic acid from the cellular receptors. May facilitate viral invasion of the upper airways by cleaving the sialic acid moieties on the mucin of the airway epithelial cells. Likely to plays a role in the budding process through its association with lipid rafts during intracellular transport. May additionally display a raft-association independent effect on budding. Plays a role in the determination of host range restriction on replication and virulence. Sialidase activity in late endosome/lysosome traffic seems to enhance virus replication. The sequence is that of Neuraminidase from Influenza A virus (strain A/Turkey/Ontario/6118/1968 H8N4).